A 227-amino-acid chain; its full sequence is uncharacterized protein (227 aa).

ATP is bound at residue 17–24 (GKTGCGKT).

This is an uncharacterized protein from Methanocaldococcus jannaschii (strain ATCC 43067 / DSM 2661 / JAL-1 / JCM 10045 / NBRC 100440) (Methanococcus jannaschii).